Consider the following 201-residue polypeptide: 2-phospho-L-lactate guanylyltransferase (201 aa).

Belongs to the CofC family. As to quaternary structure, homodimer.

The enzyme catalyses (2S)-2-phospholactate + GTP + H(+) = (2S)-lactyl-2-diphospho-5'-guanosine + diphosphate. It functions in the pathway cofactor biosynthesis; coenzyme F420 biosynthesis. Guanylyltransferase that catalyzes the activation of (2S)-2-phospholactate (2-PL) as (2S)-lactyl-2-diphospho-5'-guanosine, via the condensation of 2-PL with GTP. It is involved in the biosynthesis of coenzyme F420, a hydride carrier cofactor. The chain is 2-phospho-L-lactate guanylyltransferase from Natronomonas pharaonis (strain ATCC 35678 / DSM 2160 / CIP 103997 / JCM 8858 / NBRC 14720 / NCIMB 2260 / Gabara) (Halobacterium pharaonis).